The chain runs to 331 residues: Probable allantoicase (331 aa).

Belongs to the allantoicase family.

It carries out the reaction allantoate + H2O = (S)-ureidoglycolate + urea. It participates in nitrogen metabolism; (S)-allantoin degradation; (S)-ureidoglycolate from allantoate (aminidohydrolase route): step 1/1. In Pseudomonas savastanoi pv. phaseolicola (strain 1448A / Race 6) (Pseudomonas syringae pv. phaseolicola (strain 1448A / Race 6)), this protein is Probable allantoicase.